The sequence spans 191 residues: MLKNALAALVLGSALIGGQAMAADYAIDKQGQHAFVNFKISHLGYSWLYGTFKDFDGKFSFDAANPEASKVSVTLNTASVDTNHAERDKHIRSADFLNVSKHGTATFESTSVKSTGEGTADITGDLTLNGVTKPVVIAAKFIGEGKDPWGGYRAGFEGTTTLKLKDFDITKDLGPASETVELILSIEGIRQ.

Positions 1 to 22 are cleaved as a signal peptide; sequence MLKNALAALVLGSALIGGQAMA.

It belongs to the UPF0312 family. Type 1 subfamily.

It is found in the periplasm. This chain is UPF0312 protein Pmen_0419, found in Ectopseudomonas mendocina (strain ymp) (Pseudomonas mendocina).